A 666-amino-acid polypeptide reads, in one-letter code: Endogenous retrovirus group K member 10 Gag polyprotein (666 aa).

Gly-2 is lipidated: N-myristoyl glycine. The interval 164–183 is disordered; sequence EGKGPELMGPSESKPRGTSP. 2 consecutive CCHC-type zinc fingers follow at residues 544–561 and 580–597; these read GKCY…NCPV and DLCP…QCRS. The disordered stretch occupies residues 598 to 642; the sequence is KFDKNGQPLSGNEQRGQPQAPQQTGAFPIQPFVPQGFQGQQPPLS. The span at 604–622 shows a compositional bias: polar residues; that stretch reads QPLSGNEQRGQPQAPQQTG. A compositionally biased stretch (low complexity) spans 624–640; it reads FPIQPFVPQGFQGQQPP.

Belongs to the beta type-B retroviral Gag protein family. HERV class-II K(HML-2) gag subfamily. Post-translationally, myristoylation is essential for retroviral assembly. Alteration of the glycine residue leads to a block in the budding of particles and an accumulation of Gag inside the cell. In terms of processing, specific enzymatic cleavages may yield mature proteins.

It is found in the cell membrane. The products of the Gag polyproteins of infectious retroviruses perform highly complex orchestrated tasks during the assembly, budding, maturation, and infection stages of the viral replication cycle. During viral assembly, the proteins form membrane associations and self-associations that ultimately result in budding of an immature virion from the infected cell. Gag precursors also function during viral assembly to selectively bind and package two plus strands of genomic RNA. Endogenous Gag proteins may have kept, lost or modified their original function during evolution. This Homo sapiens (Human) protein is Endogenous retrovirus group K member 10 Gag polyprotein (ERVK-10).